Here is a 336-residue protein sequence, read N- to C-terminus: Aspartate carbamoyltransferase catalytic subunit (336 aa).

Carbamoyl phosphate is bound by residues arginine 71 and threonine 72. Lysine 99 is an L-aspartate binding site. The carbamoyl phosphate site is built by arginine 121, histidine 151, and glutamine 154. Arginine 184 and arginine 239 together coordinate L-aspartate. Positions 280 and 281 each coordinate carbamoyl phosphate.

This sequence belongs to the aspartate/ornithine carbamoyltransferase superfamily. ATCase family. As to quaternary structure, heterododecamer (2C3:3R2) of six catalytic PyrB chains organized as two trimers (C3), and six regulatory PyrI chains organized as three dimers (R2).

The enzyme catalyses carbamoyl phosphate + L-aspartate = N-carbamoyl-L-aspartate + phosphate + H(+). Its pathway is pyrimidine metabolism; UMP biosynthesis via de novo pathway; (S)-dihydroorotate from bicarbonate: step 2/3. Catalyzes the condensation of carbamoyl phosphate and aspartate to form carbamoyl aspartate and inorganic phosphate, the committed step in the de novo pyrimidine nucleotide biosynthesis pathway. The protein is Aspartate carbamoyltransferase catalytic subunit of Azotobacter vinelandii (strain DJ / ATCC BAA-1303).